A 186-amino-acid polypeptide reads, in one-letter code: Imidazoleglycerol-phosphate dehydratase (186 aa).

The protein belongs to the imidazoleglycerol-phosphate dehydratase family.

The protein localises to the cytoplasm. It catalyses the reaction D-erythro-1-(imidazol-4-yl)glycerol 3-phosphate = 3-(imidazol-4-yl)-2-oxopropyl phosphate + H2O. It functions in the pathway amino-acid biosynthesis; L-histidine biosynthesis; L-histidine from 5-phospho-alpha-D-ribose 1-diphosphate: step 6/9. The sequence is that of Imidazoleglycerol-phosphate dehydratase from Pyrobaculum aerophilum (strain ATCC 51768 / DSM 7523 / JCM 9630 / CIP 104966 / NBRC 100827 / IM2).